The sequence spans 30 residues: Large ribosomal subunit protein bL25 (30 aa).

It belongs to the bacterial ribosomal protein bL25 family. Part of the 50S ribosomal subunit; part of the 5S rRNA/L5/L18/L25 subcomplex. Contacts the 5S rRNA. Binds to the 5S rRNA independently of L5 and L18.

Functionally, this is one of the proteins that binds to the 5S RNA in the ribosome where it forms part of the central protuberance. This is Large ribosomal subunit protein bL25 (rplY) from Anabaena variabilis.